Here is a 371-residue protein sequence, read N- to C-terminus: Uroporphyrinogen decarboxylase (371 aa).

A compositionally biased stretch (polar residues) spans 1–14 (MARWATMSTETTGT). The disordered stretch occupies residues 1 to 30 (MARWATMSTETTGTGARDEGPRPGDPADSP). Residues 49-53 (RQAGR), Asp98, Tyr173, Ser228, and His342 each bind substrate.

Belongs to the uroporphyrinogen decarboxylase family. As to quaternary structure, homodimer.

The protein localises to the cytoplasm. It carries out the reaction uroporphyrinogen III + 4 H(+) = coproporphyrinogen III + 4 CO2. It functions in the pathway porphyrin-containing compound metabolism; protoporphyrin-IX biosynthesis; coproporphyrinogen-III from 5-aminolevulinate: step 4/4. Catalyzes the decarboxylation of four acetate groups of uroporphyrinogen-III to yield coproporphyrinogen-III. This chain is Uroporphyrinogen decarboxylase, found in Salinispora tropica (strain ATCC BAA-916 / DSM 44818 / JCM 13857 / NBRC 105044 / CNB-440).